The sequence spans 189 residues: Probable nicotinate-nucleotide adenylyltransferase (189 aa).

It belongs to the NadD family.

The catalysed reaction is nicotinate beta-D-ribonucleotide + ATP + H(+) = deamido-NAD(+) + diphosphate. It participates in cofactor biosynthesis; NAD(+) biosynthesis; deamido-NAD(+) from nicotinate D-ribonucleotide: step 1/1. Its function is as follows. Catalyzes the reversible adenylation of nicotinate mononucleotide (NaMN) to nicotinic acid adenine dinucleotide (NaAD). This Cereibacter sphaeroides (strain ATCC 17023 / DSM 158 / JCM 6121 / CCUG 31486 / LMG 2827 / NBRC 12203 / NCIMB 8253 / ATH 2.4.1.) (Rhodobacter sphaeroides) protein is Probable nicotinate-nucleotide adenylyltransferase.